Here is a 152-residue protein sequence, read N- to C-terminus: Gene 35 protein (152 aa).

Residues 86-120 adopt a coiled-coil conformation; sequence PKKVDILEELTDKVEELEANVSFEVDRIQGYQERY.

Belongs to the herpesviridae UL96 family.

In Connochaetes taurinus (Blue wildebeest), this protein is Gene 35 protein (35).